The primary structure comprises 277 residues: NLP effector protein Pc109174 (277 aa).

An N-terminal signal peptide occupies residues 1–19 (MNLVPALVLLLALAQTVLG). The short motif at 119–125 (KSRHLWA) is the Hepta-peptide GHRHDWE motif element. Asn-199 carries an N-linked (GlcNAc...) asparagine glycan.

The protein belongs to the Necrosis inducing protein (NPP1) family.

The protein localises to the secreted. In terms of biological role, secreted effector that contributes strongly to virulence during infection by P.capsici. Induces cell death in the Solanaceae, including hot pepper. This is NLP effector protein Pc109174 from Phytophthora capsici.